The sequence spans 130 residues: MSCRLLLYVSLCLVETALMNTKITQSPRYLILGRANKSLECEQHLGHNAMYWYKQSAEKPPELMFLYNLKQLIRNETVPSRFIPECPDSSKLLLHISAVDPEDSAVYFCASSHGENTEVFFGKGTTLTVV.

A signal peptide spans 1-21 (MSCRLLLYVSLCLVETALMNT). The v segment stretch occupies residues 22–112 (KITQSPRYLI…DSAVYFCASS (91 aa)). N36 and N75 each carry an N-linked (GlcNAc...) asparagine glycan. The tract at residues 113–115 (HGE) is d segment. A j segment region spans residues 116–130 (NTEVFFGKGTTLTVV).

In Mus musculus (Mouse), this protein is T-cell receptor beta chain V region A20.2.25.